The chain runs to 296 residues: Cytidine deaminase (296 aa).

CMP/dCMP-type deaminase domains lie at 47–167 (EESE…FGPS) and 186–296 (DSSD…IDPA). Residue 88-90 (NLE) coordinates substrate. His101 contacts Zn(2+). Glu103 acts as the Proton donor in catalysis. Residues Cys128 and Cys131 each contribute to the Zn(2+) site.

Belongs to the cytidine and deoxycytidylate deaminase family. As to quaternary structure, homodimer. Zn(2+) serves as cofactor.

The enzyme catalyses cytidine + H2O + H(+) = uridine + NH4(+). It catalyses the reaction 2'-deoxycytidine + H2O + H(+) = 2'-deoxyuridine + NH4(+). Its function is as follows. This enzyme scavenges exogenous and endogenous cytidine and 2'-deoxycytidine for UMP synthesis. This chain is Cytidine deaminase, found in Shewanella woodyi (strain ATCC 51908 / MS32).